Consider the following 316-residue polypeptide: Gene 34 protein (316 aa).

This sequence belongs to the herpesviridae UL95 family.

In Saimiriine herpesvirus 2 (strain 11) (SaHV-2), this protein is Gene 34 protein (34).